The sequence spans 167 residues: Interferon gamma (167 aa).

Residues 1-23 (MSYTSYILAFQLCLILGSYGCYC) form the signal peptide. Gln-24 bears the Pyrrolidone carboxylic acid mark. N-linked (GlcNAc...) asparagine glycans are attached at residues Asn-41, Asn-108, and Asn-117.

The protein belongs to the type II (or gamma) interferon family. As to quaternary structure, homodimer. Interacts with IFNGR1 (via extracellular domain); this interaction promotes IFNGR1 dimerization. As to expression, released primarily from activated T lymphocytes.

The protein localises to the secreted. Its function is as follows. Type II interferon produced by immune cells such as T-cells and NK cells that plays crucial roles in antimicrobial, antiviral, and antitumor responses by activating effector immune cells and enhancing antigen presentation. Primarily signals through the JAK-STAT pathway after interaction with its receptor IFNGR1 to affect gene regulation. Upon IFNG binding, IFNGR1 intracellular domain opens out to allow association of downstream signaling components JAK2, JAK1 and STAT1, leading to STAT1 activation, nuclear translocation and transcription of IFNG-regulated genes. Many of the induced genes are transcription factors such as IRF1 that are able to further drive regulation of a next wave of transcription. Plays a role in class I antigen presentation pathway by inducing a replacement of catalytic proteasome subunits with immunoproteasome subunits. In turn, increases the quantity, quality, and repertoire of peptides for class I MHC loading. Increases the efficiency of peptide generation also by inducing the expression of activator PA28 that associates with the proteasome and alters its proteolytic cleavage preference. Up-regulates as well MHC II complexes on the cell surface by promoting expression of several key molecules such as cathepsins B/CTSB, H/CTSH, and L/CTSL. Participates in the regulation of hematopoietic stem cells during development and under homeostatic conditions by affecting their development, quiescence, and differentiation. The sequence is that of Interferon gamma (IFNG) from Oryctolagus cuniculus (Rabbit).